Consider the following 151-residue polypeptide: Small ribosomal subunit protein uS11 (151 aa).

The protein belongs to the universal ribosomal protein uS11 family.

In Podocoryna carnea (Hydrozoan), this protein is Small ribosomal subunit protein uS11 (RPS14).